We begin with the raw amino-acid sequence, 147 residues long: Large ribosomal subunit protein bL9 (147 aa).

The protein belongs to the bacterial ribosomal protein bL9 family.

In terms of biological role, binds to the 23S rRNA. The chain is Large ribosomal subunit protein bL9 from Mycoplasmoides gallisepticum (strain R(low / passage 15 / clone 2)) (Mycoplasma gallisepticum).